The following is an 85-amino-acid chain: UPF0335 protein BQ12070 (85 aa).

The protein belongs to the UPF0335 family.

The polypeptide is UPF0335 protein BQ12070 (Bartonella quintana (strain Toulouse) (Rochalimaea quintana)).